Reading from the N-terminus, the 309-residue chain is uncharacterized protein (309 aa).

In terms of domain architecture, S4 RNA-binding spans 11-87; it reads QRLDTFLATL…FPLDILYEDE (77 aa). Asp-131 is a catalytic residue.

It belongs to the pseudouridine synthase RluA family.

It catalyses the reaction a uridine in RNA = a pseudouridine in RNA. This is an uncharacterized protein from Mycoplasma pneumoniae (strain ATCC 29342 / M129 / Subtype 1) (Mycoplasmoides pneumoniae).